We begin with the raw amino-acid sequence, 320 residues long: Serpentine receptor class gamma-17 (320 aa).

A run of 6 helical transmembrane segments spans residues Ala25–Leu45, Ile80–Phe100, Phe155–Ala175, Trp192–Val212, Phe237–Ala257, and Tyr268–Leu288.

The protein belongs to the nematode receptor-like protein srg family.

It localises to the membrane. This Caenorhabditis elegans protein is Serpentine receptor class gamma-17 (srg-17).